Reading from the N-terminus, the 159-residue chain is Large ribosomal subunit protein bL17 (159 aa).

Residues proline 119–lysine 138 show a composition bias toward low complexity. The segment at proline 119–aspartate 159 is disordered. Acidic residues predominate over residues glutamate 143–aspartate 159.

This sequence belongs to the bacterial ribosomal protein bL17 family. Part of the 50S ribosomal subunit. Contacts protein L32.

The chain is Large ribosomal subunit protein bL17 from Leifsonia xyli subsp. xyli (strain CTCB07).